Consider the following 47-residue polypeptide: Bifunctional chitinase/lysozyme (47 aa).

Residues 1 to 47 enclose the GH18 domain; that stretch reads GGIAIYWGQNGNEGTLTQTCNTGKYSYVNIAFLNKFGNGQTPEINLA.

This sequence belongs to the glycosyl hydrolase 18 family. Chitinase class II subfamily.

It localises to the secreted. It is found in the extracellular space. The enzyme catalyses Random endo-hydrolysis of N-acetyl-beta-D-glucosaminide (1-&gt;4)-beta-linkages in chitin and chitodextrins.. The catalysed reaction is Hydrolysis of (1-&gt;4)-beta-linkages between N-acetylmuramic acid and N-acetyl-D-glucosamine residues in a peptidoglycan and between N-acetyl-D-glucosamine residues in chitodextrins.. Functionally, bifunctional enzyme with lysozyme/chitinase activity. The protein is Bifunctional chitinase/lysozyme of Parthenocissus quinquefolia (Virginia creeper).